Consider the following 350-residue polypeptide: MVFRIASSPYTHNQRQTSRIMLLVLLAAVPGIVVQTWFFGWGTVLQIVLAALTAWATEAAILKLRKQHIVATLKDNSALLTGLLLAVSIPPLAPWWMVVLGTAFAVVIAKQLYGGLGHNPFNPAMIGYVVLLISFPVQMTSWLPSYEIAAQVPAFSDVLQMIFTGHTAAGGDMASLRLGIDGISQATPLDTFKTSLHAGHSVQQVLQLPVYGGVLAGLGWQWVNIAWLAGGLFLLWQKAIRWHIPVSFLLSLGLCATLGWLFSPHSLASPQMHLFSGATMLGAFFILTDPVTASTTNRGRLIFGALAGLLVWLIRSFGGYPDGVAFAVLLANITVPLIDYYTRPRVYGHR.

4 helical membrane-spanning segments follow: residues 20–40, 42–62, 89–109, and 123–143; these read IMLL…WFFG, GTVL…AAIL, IPPL…VVIA, and PAMI…TSWL. T187 is modified (FMN phosphoryl threonine). 5 helical membrane-spanning segments follow: residues 214–234, 242–262, 267–287, 301–321, and 322–342; these read VLAG…GLFL, WHIP…GWLF, LASP…FFIL, LIFG…GGYP, and DGVA…DYYT.

It belongs to the NqrB/RnfD family. As to quaternary structure, the complex is composed of six subunits: RnfA, RnfB, RnfC, RnfD, RnfE and RnfG. Requires FMN as cofactor.

It localises to the cell inner membrane. In terms of biological role, part of a membrane-bound complex that couples electron transfer with translocation of ions across the membrane. This chain is Ion-translocating oxidoreductase complex subunit D, found in Klebsiella pneumoniae (strain 342).